Consider the following 304-residue polypeptide: Protease HtpX homolog (304 aa).

2 consecutive transmembrane segments (helical) span residues phenylalanine 19 to phenylalanine 39 and leucine 41 to tyrosine 61. Histidine 146 provides a ligand contact to Zn(2+). Glutamate 147 is a catalytic residue. Histidine 150 contacts Zn(2+). A run of 2 helical transmembrane segments spans residues valine 156–leucine 176 and asparagine 192–leucine 212. Glutamate 221 serves as a coordination point for Zn(2+).

Belongs to the peptidase M48B family. The cofactor is Zn(2+).

The protein localises to the cell inner membrane. The polypeptide is Protease HtpX homolog (Dictyoglomus turgidum (strain DSM 6724 / Z-1310)).